Here is a 126-residue protein sequence, read N- to C-terminus: 13 kDa ribonucleoprotein-associated protein (126 aa).

It belongs to the eukaryotic ribosomal protein eL8 family. Component of the U3 snoRNP particle. Binds to the C'/D and B/C motifs in U3 snoRNA. Component of the 25S U4/U6.U5 tri-snRNP particle, a subcomplex of the spliceosome. Binds to the 5' stem-loop of U4 snRNA.

It is found in the nucleus. The protein resides in the nucleolus. Common component of the spliceosome and rRNA processing machinery. In association with the spliceosomal U4/U6.U5 tri-snRNP particle, required for splicing of pre-mRNA. In association with box C/D snoRNPs, required for processing of pre-ribosomal RNA (rRNA) and site-specific 2'-O-methylation of substrate RNAs. Essential for the accumulation and stability of U4 snRNA, U6 snRNA, and box C/D snoRNAs. This is 13 kDa ribonucleoprotein-associated protein (SNU13) from Mycosarcoma maydis (Corn smut fungus).